The chain runs to 522 residues: F-box/LRR-repeat protein 16 (522 aa).

Residues 38–84 form the F-box domain; the sequence is YDFTANLPDDCLAHIFQFLSAGDRKRCSLVSKRWLLVDGQNRHRLSL. LRR repeat units lie at residues 115–140, 141–166, 169–191, 266–290, 291–316, 319–344, 348–369, 370–393, 395–420, and 421–447; these read SFSLSDEALFIVSIRCSNLIRVKLRG, CREITDLGMESFARNCKSLRKLSCGS, FGAKGINAMLEHCKVLEELSLKR, RLQVTDIGLFGISKCSNLETLHIVK, TPDCSNLGLASVVERCKLLRKLHIDG, VKRIGDQGLMSVAKHCLNLQELVLIG, TYMSLSAIASNCKKLERLALCG, SGTIGDAEIGCIAEKCVTLRKFCI, GCLISDVGVQALALGCPKLVKLKVKK, and CSLVTGEVREWLRERRMTLVVSMDDDE.

This chain is F-box/LRR-repeat protein 16 (FBL16), found in Arabidopsis thaliana (Mouse-ear cress).